A 212-amino-acid chain; its full sequence is Thymidylate kinase (212 aa).

10–17 is an ATP binding site; the sequence is GLEGAGKT.

This sequence belongs to the thymidylate kinase family.

It catalyses the reaction dTMP + ATP = dTDP + ADP. Phosphorylation of dTMP to form dTDP in both de novo and salvage pathways of dTTP synthesis. The chain is Thymidylate kinase from Cronobacter sakazakii (strain ATCC BAA-894) (Enterobacter sakazakii).